A 278-amino-acid chain; its full sequence is Inner membrane mitoribosome receptor MBA1, mitochondrial (278 aa).

Residues 1–33 (MSVLRSTCLFFPPRSLLISFNKRRLFSTSRLIL) constitute a mitochondrion transit peptide.

In terms of assembly, interacts with OXA1 and MDM38. Binds to mitoribosomes in order to recruit them to the mitochondrial inner membrane.

The protein resides in the mitochondrion inner membrane. Its function is as follows. Mitochondrial inner membrane-associated mitoribosome receptor that spatially aligns the mitoribosome exit tunnel with the membrane insertion machinery and allows cotranslational protein membrane insertion. This is Inner membrane mitoribosome receptor MBA1, mitochondrial from Saccharomyces cerevisiae (strain ATCC 204508 / S288c) (Baker's yeast).